The chain runs to 91 residues: Small ribosomal subunit protein uS19 (91 aa).

The protein belongs to the universal ribosomal protein uS19 family.

Protein S19 forms a complex with S13 that binds strongly to the 16S ribosomal RNA. The chain is Small ribosomal subunit protein uS19 from Actinobacillus pleuropneumoniae serotype 7 (strain AP76).